Consider the following 91-residue polypeptide: MGIFDWKHWIVILIVVVLVFGTKKLKGLGTDVGESIKGFRKAMHDDDKPAEQPAPQPQQAQPAPQGSPLNQPHTIDAQAHKVDEPIRKDQV.

The chain crosses the membrane as a helical span at residues 1–21 (MGIFDWKHWIVILIVVVLVFG). The interval 42-91 (AMHDDDKPAEQPAPQPQQAQPAPQGSPLNQPHTIDAQAHKVDEPIRKDQV) is disordered. A compositionally biased stretch (low complexity) spans 51-64 (EQPAPQPQQAQPAP). The segment covering 78–91 (QAHKVDEPIRKDQV) has biased composition (basic and acidic residues).

This sequence belongs to the TatA/E family. In terms of assembly, the Tat system comprises two distinct complexes: a TatABC complex, containing multiple copies of TatA, TatB and TatC subunits, and a separate TatA complex, containing only TatA subunits. Substrates initially bind to the TatABC complex, which probably triggers association of the separate TatA complex to form the active translocon.

The protein resides in the cell inner membrane. Part of the twin-arginine translocation (Tat) system that transports large folded proteins containing a characteristic twin-arginine motif in their signal peptide across membranes. TatA could form the protein-conducting channel of the Tat system. The sequence is that of Sec-independent protein translocase protein TatA from Pseudomonas syringae pv. tomato (strain ATCC BAA-871 / DC3000).